A 474-amino-acid polypeptide reads, in one-letter code: ERO1-like protein alpha (474 aa).

Positions 1-29 are cleaved as a signal peptide; that stretch reads MVSGCCRLDMSSYVSVLVLCSLLLWGSNS. 8 disulfide bridges follow: Cys-40–Cys-53, Cys-42–Cys-51, Cys-90–Cys-398, Cys-99–Cys-104, Cys-99–Cys-138, Cys-104–Cys-109, Cys-215–Cys-248, and Cys-401–Cys-404. 3 residues coordinate FAD: Arg-194, Thr-196, and Trp-207. FAD is bound by residues Ser-259, His-262, Arg-294, and Arg-307. 2 N-linked (GlcNAc...) asparagine glycosylation sites follow: Asn-340 and Asn-391. A glycan (N-linked (GlcNAc...) asparagine) is linked at Asn-430.

Belongs to the EROs family. In terms of assembly, predominantly monomer. May function both as a monomer and a homodimer. Requires FAD as cofactor. In terms of processing, the Cys-99/Cys-104 and Cys-401/Cys-404 disulfide bonds constitute the redox-active center. The Cys-99/Cys-104 disulfide bond may accept electron from protein disulfide isomerase (PDI) and funnel them to the active site disulfide Cys-401/Cys-404.

The protein resides in the endoplasmic reticulum membrane. Its activity is regulated as follows. Enzyme activity is tightly regulated to prevent the accumulation of reactive oxygen species in the endoplasmic reticulum. Reversibly down-regulated by the formation of disulfide bonds between the active site Cys-99 and Cys-138, and between Cys-104 and Cys-109. Glutathione may be required to regulate its activity in the endoplasmic reticulum. Oxidoreductase involved in disulfide bond formation in the endoplasmic reticulum. Efficiently reoxidizes P4HB/PDI, the enzyme catalyzing protein disulfide formation, in order to allow P4HB to sustain additional rounds of disulfide formation. Following P4HB reoxidation, passes its electrons to molecular oxygen via FAD, leading to the production of reactive oxygen species (ROS) in the cell. Required for the folding of immunoglobulins. The polypeptide is ERO1-like protein alpha (Xenopus tropicalis (Western clawed frog)).